Consider the following 444-residue polypeptide: Tol-Pal system protein TolB (444 aa).

Positions 1 to 19 (MRNIIYFILSLLFSVTSYA) are cleaved as a signal peptide.

It belongs to the TolB family. In terms of assembly, the Tol-Pal system is composed of five core proteins: the inner membrane proteins TolA, TolQ and TolR, the periplasmic protein TolB and the outer membrane protein Pal. They form a network linking the inner and outer membranes and the peptidoglycan layer.

It localises to the periplasm. Part of the Tol-Pal system, which plays a role in outer membrane invagination during cell division and is important for maintaining outer membrane integrity. This Rickettsia peacockii (strain Rustic) protein is Tol-Pal system protein TolB.